Here is a 594-residue protein sequence, read N- to C-terminus: Dictomallein-4 (594 aa).

Residues 1-18 (MKLVLIFLIINFLLIINC) form the signal peptide. The region spanning 147–408 (PDVSQDYTLK…QNYFKNSIYY (262 aa)) is the Peptidase M66 domain. Zn(2+) is bound at residue H300. E301 is a catalytic residue. Zn(2+) is bound by residues H304 and H310.

The protein belongs to the dictomallein family. Zn(2+) is required as a cofactor.

Its subcellular location is the secreted. This is Dictomallein-4 (dtmlD) from Dictyostelium discoideum (Social amoeba).